Reading from the N-terminus, the 299-residue chain is MKTLLEVSNLTSDDIESIFNLTIQYFNNTNLNHNILTGKVIVNLFFESSTRTLSSFEIAEKSLGAHSITLNINTSSINKGESIIDTISNIDAMNPDLIIIRSQYSQFIKKISEYLPSCSIINAGDGHHEHPTQALTDYCTIRYIKKDINNLNISICGDILHSRVARSNIRLLSRYGANISLVAPPTLSCNLTGISHIYHNLIEGIRNADVIMLLRLQKERIINCVIPSEQEYSHLYMLNHEKLLHAKKDVIVMHPGPTNKGIEISNNVAEKNSVILLQVKMGVAARKAILHYLLYNKSI.

The carbamoyl phosphate site is built by Arg51 and Thr52. Residue Lys79 coordinates L-aspartate. Positions 101, 130, and 133 each coordinate carbamoyl phosphate. L-aspartate-binding residues include Arg163 and Arg215. Residues Gly256 and Pro257 each coordinate carbamoyl phosphate.

It belongs to the aspartate/ornithine carbamoyltransferase superfamily. ATCase family. In terms of assembly, heterododecamer (2C3:3R2) of six catalytic PyrB chains organized as two trimers (C3), and six regulatory PyrI chains organized as three dimers (R2).

The enzyme catalyses carbamoyl phosphate + L-aspartate = N-carbamoyl-L-aspartate + phosphate + H(+). It functions in the pathway pyrimidine metabolism; UMP biosynthesis via de novo pathway; (S)-dihydroorotate from bicarbonate: step 2/3. Functionally, catalyzes the condensation of carbamoyl phosphate and aspartate to form carbamoyl aspartate and inorganic phosphate, the committed step in the de novo pyrimidine nucleotide biosynthesis pathway. In Ehrlichia chaffeensis (strain ATCC CRL-10679 / Arkansas), this protein is Aspartate carbamoyltransferase catalytic subunit.